Consider the following 234-residue polypeptide: Sugar fermentation stimulation protein homolog (234 aa).

The protein belongs to the SfsA family.

In Shewanella loihica (strain ATCC BAA-1088 / PV-4), this protein is Sugar fermentation stimulation protein homolog.